The sequence spans 168 residues: N-alpha-acetyltransferase (168 aa).

In terms of domain architecture, N-acetyltransferase spans 13-168 (YQIRLATLSD…EDAYLMAAPL (156 aa)). Tyrosine 38 is a substrate binding site. Residue histidine 89 participates in Zn(2+) binding. Acetyl-CoA is bound by residues 93–95 (IAV) and 101–106 (KIGVGT). CoA is bound by residues 93–95 (IAV) and 101–106 (KIGVGT). Glutamate 128 provides a ligand contact to Zn(2+). Acetyl-CoA is bound by residues asparagine 133 and 140-142 (YKK). Asparagine 133 serves as a coordination point for CoA. Substrate is bound at residue tyrosine 155.

Belongs to the acetyltransferase family. ARD1 subfamily. Homodimer.

The protein resides in the cytoplasm. The catalysed reaction is N-terminal L-alanyl-[protein] + acetyl-CoA = N-terminal N(alpha)-acetyl-L-alanyl-[protein] + CoA + H(+). It catalyses the reaction N-terminal L-seryl-[protein] + acetyl-CoA = N-terminal N(alpha)-acetyl-L-seryl-[protein] + CoA + H(+). The enzyme catalyses N-terminal L-methionyl-L-leucyl-[protein] + acetyl-CoA = N-terminal N(alpha)-acetyl-L-methionyl-L-leucyl-[protein] + CoA + H(+). It carries out the reaction N-terminal L-methionyl-L-glutamyl-[protein] + acetyl-CoA = N-terminal N(alpha)-acetyl-L-methionyl-L-glutamyl-[protein] + CoA + H(+). In terms of biological role, displays alpha (N-terminal) acetyltransferase activity. Catalyzes the covalent attachment of an acetyl moiety from acetyl-CoA to the free alpha-amino group at the N-terminus of a protein. The sequence is that of N-alpha-acetyltransferase from Sulfolobus acidocaldarius (strain ATCC 33909 / DSM 639 / JCM 8929 / NBRC 15157 / NCIMB 11770).